Consider the following 328-residue polypeptide: tRNA uridine(34) hydroxylase (328 aa).

The 95-residue stretch at 130–224 folds into the Rhodanese domain; it reads LDKDTVVLDT…YGKDPEVQGE (95 aa). The active-site Cysteine persulfide intermediate is the Cys184.

This sequence belongs to the TrhO family.

The catalysed reaction is uridine(34) in tRNA + AH2 + O2 = 5-hydroxyuridine(34) in tRNA + A + H2O. Catalyzes oxygen-dependent 5-hydroxyuridine (ho5U) modification at position 34 in tRNAs. This chain is tRNA uridine(34) hydroxylase, found in Streptococcus pneumoniae (strain Hungary19A-6).